The primary structure comprises 56 residues: UPF0391 membrane protein HCH_04387 (56 aa).

2 helical membrane passes run Ile6–Ala26 and Ile30–Gly50.

This sequence belongs to the UPF0391 family.

It is found in the cell membrane. This is UPF0391 membrane protein HCH_04387 from Hahella chejuensis (strain KCTC 2396).